The following is a 146-amino-acid chain: Mite group 2 allergen Der p 2 (146 aa).

The signal sequence occupies residues 1–17 (MMYKILCLSLLVAAVAR). Disulfide bonds link Cys25-Cys136, Cys38-Cys44, and Cys90-Cys95.

It belongs to the NPC2 family.

The protein resides in the secreted. This is Mite group 2 allergen Der p 2 (DERP2) from Dermatophagoides pteronyssinus (European house dust mite).